We begin with the raw amino-acid sequence, 1090 residues long: Pullulanase (1090 aa).

The signal sequence occupies residues 1–19; sequence MLRYTRNALVLGSLVLLSG. Cys-20 carries N-palmitoyl cysteine lipidation. Cys-20 is lipidated: S-diacylglycerol cysteine. The active-site Nucleophile is Asp-684. The active-site Proton donor is the Glu-713.

It belongs to the glycosyl hydrolase 13 family. As to quaternary structure, homotrimer.

Its subcellular location is the cell membrane. The enzyme catalyses Hydrolysis of (1-&gt;6)-alpha-D-glucosidic linkages in pullulan, amylopectin and glycogen, and in the alpha- and beta-limit dextrins of amylopectin and glycogen.. The chain is Pullulanase (pulA) from Klebsiella pneumoniae.